A 455-amino-acid chain; its full sequence is Bifunctional protein GlmU (455 aa).

The tract at residues 1–226 (MSLEIVILAA…PMEVQGANDR (226 aa)) is pyrophosphorylase. UDP-N-acetyl-alpha-D-glucosamine contacts are provided by residues 8–11 (LAAG), Lys22, Gln73, 78–79 (GT), 99–101 (YGD), Gly136, Glu151, Asn166, and Asn224. Residue Asp101 participates in Mg(2+) binding. Residue Asn224 coordinates Mg(2+). Residues 227-247 (KQLSELERHYQLRAGRRLMAQ) are linker. An N-acetyltransferase region spans residues 248 to 455 (GVTLRDPARF…WKRPEKIKKN (208 aa)). The UDP-N-acetyl-alpha-D-glucosamine site is built by Arg330 and Lys348. The Proton acceptor role is filled by His360. The UDP-N-acetyl-alpha-D-glucosamine site is built by Tyr363 and Asn374. Acetyl-CoA contacts are provided by residues Ala377, 383 to 384 (NY), Ser402, Ala420, and Arg437.

In the N-terminal section; belongs to the N-acetylglucosamine-1-phosphate uridyltransferase family. This sequence in the C-terminal section; belongs to the transferase hexapeptide repeat family. In terms of assembly, homotrimer. It depends on Mg(2+) as a cofactor.

It is found in the cytoplasm. The catalysed reaction is alpha-D-glucosamine 1-phosphate + acetyl-CoA = N-acetyl-alpha-D-glucosamine 1-phosphate + CoA + H(+). It carries out the reaction N-acetyl-alpha-D-glucosamine 1-phosphate + UTP + H(+) = UDP-N-acetyl-alpha-D-glucosamine + diphosphate. Its pathway is nucleotide-sugar biosynthesis; UDP-N-acetyl-alpha-D-glucosamine biosynthesis; N-acetyl-alpha-D-glucosamine 1-phosphate from alpha-D-glucosamine 6-phosphate (route II): step 2/2. It participates in nucleotide-sugar biosynthesis; UDP-N-acetyl-alpha-D-glucosamine biosynthesis; UDP-N-acetyl-alpha-D-glucosamine from N-acetyl-alpha-D-glucosamine 1-phosphate: step 1/1. It functions in the pathway bacterial outer membrane biogenesis; LPS lipid A biosynthesis. In terms of biological role, catalyzes the last two sequential reactions in the de novo biosynthetic pathway for UDP-N-acetylglucosamine (UDP-GlcNAc). The C-terminal domain catalyzes the transfer of acetyl group from acetyl coenzyme A to glucosamine-1-phosphate (GlcN-1-P) to produce N-acetylglucosamine-1-phosphate (GlcNAc-1-P), which is converted into UDP-GlcNAc by the transfer of uridine 5-monophosphate (from uridine 5-triphosphate), a reaction catalyzed by the N-terminal domain. The chain is Bifunctional protein GlmU from Pseudomonas fluorescens (strain Pf0-1).